The primary structure comprises 660 residues: Bifunctional polymyxin resistance protein ArnA (660 aa).

Residues Met-1–Leu-304 form a formyltransferase ArnAFT region. His-104 functions as the Proton donor; for formyltransferase activity in the catalytic mechanism. (6R)-10-formyltetrahydrofolate is bound by residues Arg-114 and Val-136 to Asp-140. The dehydrogenase ArnADH stretch occupies residues Arg-314–Ser-660. Residues Asp-347 and Asp-368–Ile-369 contribute to the NAD(+) site. UDP-alpha-D-glucuronate contacts are provided by residues Ala-393, Tyr-398, and Thr-432–Ser-433. Glu-434 serves as the catalytic Proton acceptor; for decarboxylase activity. UDP-alpha-D-glucuronate is bound by residues Arg-460, Asn-492, Lys-526–Arg-535, and Tyr-613. Arg-619 functions as the Proton donor; for decarboxylase activity in the catalytic mechanism.

It in the N-terminal section; belongs to the Fmt family. UDP-L-Ara4N formyltransferase subfamily. This sequence in the C-terminal section; belongs to the NAD(P)-dependent epimerase/dehydratase family. UDP-glucuronic acid decarboxylase subfamily. In terms of assembly, homohexamer, formed by a dimer of trimers.

The catalysed reaction is UDP-alpha-D-glucuronate + NAD(+) = UDP-beta-L-threo-pentopyranos-4-ulose + CO2 + NADH. The enzyme catalyses UDP-4-amino-4-deoxy-beta-L-arabinose + (6R)-10-formyltetrahydrofolate = UDP-4-deoxy-4-formamido-beta-L-arabinose + (6S)-5,6,7,8-tetrahydrofolate + H(+). Its pathway is nucleotide-sugar biosynthesis; UDP-4-deoxy-4-formamido-beta-L-arabinose biosynthesis; UDP-4-deoxy-4-formamido-beta-L-arabinose from UDP-alpha-D-glucuronate: step 1/3. The protein operates within nucleotide-sugar biosynthesis; UDP-4-deoxy-4-formamido-beta-L-arabinose biosynthesis; UDP-4-deoxy-4-formamido-beta-L-arabinose from UDP-alpha-D-glucuronate: step 3/3. It participates in bacterial outer membrane biogenesis; lipopolysaccharide biosynthesis. Its function is as follows. Bifunctional enzyme that catalyzes the oxidative decarboxylation of UDP-glucuronic acid (UDP-GlcUA) to UDP-4-keto-arabinose (UDP-Ara4O) and the addition of a formyl group to UDP-4-amino-4-deoxy-L-arabinose (UDP-L-Ara4N) to form UDP-L-4-formamido-arabinose (UDP-L-Ara4FN). The modified arabinose is attached to lipid A and is required for resistance to polymyxin and cationic antimicrobial peptides. The protein is Bifunctional polymyxin resistance protein ArnA of Salmonella paratyphi C (strain RKS4594).